Consider the following 343-residue polypeptide: Uroporphyrinogen decarboxylase (343 aa).

Residues 23–27 (RQAGR), Phe42, Asp73, Tyr150, Ser205, and His322 each bind substrate.

It belongs to the uroporphyrinogen decarboxylase family. As to quaternary structure, homodimer.

The protein localises to the cytoplasm. It carries out the reaction uroporphyrinogen III + 4 H(+) = coproporphyrinogen III + 4 CO2. It participates in porphyrin-containing compound metabolism; protoporphyrin-IX biosynthesis; coproporphyrinogen-III from 5-aminolevulinate: step 4/4. With respect to regulation, inhibited by N-ethyl-maleimide and phenylglyoxal. In terms of biological role, catalyzes the decarboxylation of four acetate groups of uroporphyrinogen-III to yield coproporphyrinogen-III. This is Uroporphyrinogen decarboxylase (hemE) from Cereibacter sphaeroides (strain ATCC 17023 / DSM 158 / JCM 6121 / CCUG 31486 / LMG 2827 / NBRC 12203 / NCIMB 8253 / ATH 2.4.1.) (Rhodobacter sphaeroides).